A 474-amino-acid chain; its full sequence is Coronin-1C (474 aa).

WD repeat units lie at residues 78 to 118 (GHTG…LTLS), 128 to 168 (GHSK…ALIN), 172 to 202 (MHSD…RVID), 215 to 249 (AHEG…ALWN), and 263 to 303 (DTSN…PYVH). Residues 435 to 474 (VQNEAKLDEILKEIKSIKETICSQDERISKLEQQLAKMAA) adopt a coiled-coil conformation. An N6-acetyllysine modification is found at Lys-446.

The protein belongs to the WD repeat coronin family. Homotrimer. Binds F-actin. Interacts with RCC2. Interacts preferentially with nucleotide-free and GDP-bound RAC1. Interacts with VIM (via head domain). Interacts with MICAL2; this interaction recruits MICAL2 to the actin filaments. Detected in skeletal muscle (at protein level). Detected in fibroblasts (at protein level). Ubiquitous.

It localises to the cell membrane. The protein resides in the cell projection. It is found in the lamellipodium. Its subcellular location is the ruffle membrane. The protein localises to the cytoplasm. It localises to the cytoskeleton. The protein resides in the cell cortex. It is found in the endosome membrane. Its function is as follows. Plays a role in directed cell migration by regulating the activation and subcellular location of RAC1. Increases the presence of activated RAC1 at the leading edge of migrating cells. Required for normal organization of the cytoskeleton, including the actin cytoskeleton, microtubules and the vimentin intermediate filaments. Required for normal cell proliferation, cell migration, and normal formation of lamellipodia. Plays a role in endoplasmic reticulum-associated endosome fission: localizes to endosome membrane tubules and promotes recruitment of TMCC1, leading to recruitment of the endoplasmic reticulum to endosome tubules for fission. Endosome membrane fission of early and late endosomes is essential to separate regions destined for lysosomal degradation from carriers to be recycled to the plasma membrane. Required for normal distribution of mitochondria within cells. The polypeptide is Coronin-1C (Coro1c) (Mus musculus (Mouse)).